Reading from the N-terminus, the 347-residue chain is MAPQAPDREKALELALAQIEKSHGKGSVMRLGDEVRAPISVIPTGSIALDVALGIGGLPRGRVIEIYGPESSGKTTVALHAVANAQAAGGIAAFIDAEHALDPDYAKKLGVDTDSLLVSQPDTGEQALEIADMLIRSGALDILVIDSVAALVPRAEIEGEMGDSHVGLQARLMSQALRKITGALSNSGTTAIFINQLREKIGVMFGSPETTTGGKALKFYASVRMDVRRIETLKDGTDAVGNRTRVKIVKNKVSPPFKQAEFDILYGKGISKEGSLIDMGVEHGFIRKSGSWFTYEGEQLGQGKENARKFLLENGDVANEIEKKIKEKLNIGAVVTADDVLPAPVDF.

68 to 75 (GPESSGKT) lines the ATP pocket.

This sequence belongs to the RecA family.

The protein resides in the cytoplasm. Its function is as follows. Can catalyze the hydrolysis of ATP in the presence of single-stranded DNA, the ATP-dependent uptake of single-stranded DNA by duplex DNA, and the ATP-dependent hybridization of homologous single-stranded DNAs. It interacts with LexA causing its activation and leading to its autocatalytic cleavage. The chain is Protein RecA from Mycobacterium sp. (strain JLS).